The chain runs to 393 residues: NAD(P)H-quinone oxidoreductase subunit H, chloroplastic (393 aa).

This sequence belongs to the complex I 49 kDa subunit family. NDH is composed of at least 16 different subunits, 5 of which are encoded in the nucleus.

It localises to the plastid. Its subcellular location is the chloroplast thylakoid membrane. It catalyses the reaction a plastoquinone + NADH + (n+1) H(+)(in) = a plastoquinol + NAD(+) + n H(+)(out). The catalysed reaction is a plastoquinone + NADPH + (n+1) H(+)(in) = a plastoquinol + NADP(+) + n H(+)(out). NDH shuttles electrons from NAD(P)H:plastoquinone, via FMN and iron-sulfur (Fe-S) centers, to quinones in the photosynthetic chain and possibly in a chloroplast respiratory chain. The immediate electron acceptor for the enzyme in this species is believed to be plastoquinone. Couples the redox reaction to proton translocation, and thus conserves the redox energy in a proton gradient. This Platanus occidentalis (Sycamore) protein is NAD(P)H-quinone oxidoreductase subunit H, chloroplastic.